Consider the following 319-residue polypeptide: 3-oxoacyl-[acyl-carrier-protein] reductase, chloroplastic (319 aa).

The N-terminal 57 residues, 1 to 57, are a transit peptide targeting the chloroplast; that stretch reads MAAAVAAPRLISLKAVAKLGFREISQIRQLAPLHSAIPHFGMLRCRSRQPFSTSVVK. The residue at position 58 (A58) is an N-acetylalanine. 81-105 serves as a coordination point for NADP(+); sequence ITGASRGIGKAIALALGKAGCKVLV. S213 is a binding site for substrate. Residue Y226 is the Proton acceptor of the active site.

The protein belongs to the short-chain dehydrogenases/reductases (SDR) family. Homotetramer.

The protein resides in the plastid. Its subcellular location is the chloroplast. It carries out the reaction a (3R)-hydroxyacyl-[ACP] + NADP(+) = a 3-oxoacyl-[ACP] + NADPH + H(+). Its pathway is lipid metabolism; fatty acid biosynthesis. The protein is 3-oxoacyl-[acyl-carrier-protein] reductase, chloroplastic of Arabidopsis thaliana (Mouse-ear cress).